A 166-amino-acid chain; its full sequence is NADH-quinone oxidoreductase subunit B 1 (166 aa).

The [4Fe-4S] cluster site is built by C39, C40, C106, and C135.

The protein belongs to the complex I 20 kDa subunit family. NDH-1 is composed of 14 different subunits. Subunits NuoB, C, D, E, F, and G constitute the peripheral sector of the complex. The cofactor is [4Fe-4S] cluster.

It localises to the cell membrane. It catalyses the reaction a quinone + NADH + 5 H(+)(in) = a quinol + NAD(+) + 4 H(+)(out). Functionally, NDH-1 shuttles electrons from NADH, via FMN and iron-sulfur (Fe-S) centers, to quinones in the respiratory chain. The immediate electron acceptor for the enzyme in this species is believed to be a menaquinone. Couples the redox reaction to proton translocation (for every two electrons transferred, four hydrogen ions are translocated across the cytoplasmic membrane), and thus conserves the redox energy in a proton gradient. This is NADH-quinone oxidoreductase subunit B 1 from Symbiobacterium thermophilum (strain DSM 24528 / JCM 14929 / IAM 14863 / T).